The following is a 518-amino-acid chain: Bifunctional purine biosynthesis protein PurH (518 aa).

In terms of domain architecture, MGS-like spans 1-144 (MSKRALISVS…KNHASVTVVC (144 aa)).

It belongs to the PurH family.

The enzyme catalyses (6R)-10-formyltetrahydrofolate + 5-amino-1-(5-phospho-beta-D-ribosyl)imidazole-4-carboxamide = 5-formamido-1-(5-phospho-D-ribosyl)imidazole-4-carboxamide + (6S)-5,6,7,8-tetrahydrofolate. It carries out the reaction IMP + H2O = 5-formamido-1-(5-phospho-D-ribosyl)imidazole-4-carboxamide. It participates in purine metabolism; IMP biosynthesis via de novo pathway; 5-formamido-1-(5-phospho-D-ribosyl)imidazole-4-carboxamide from 5-amino-1-(5-phospho-D-ribosyl)imidazole-4-carboxamide (10-formyl THF route): step 1/1. Its pathway is purine metabolism; IMP biosynthesis via de novo pathway; IMP from 5-formamido-1-(5-phospho-D-ribosyl)imidazole-4-carboxamide: step 1/1. This is Bifunctional purine biosynthesis protein PurH from Lactococcus lactis subsp. lactis (strain IL1403) (Streptococcus lactis).